Consider the following 121-residue polypeptide: Small ribosomal subunit protein uS13 (121 aa).

Residues 91 to 121 (HRMSLPVRGQRTRTNARTRRGSRKTVAGRKK) form a disordered region. The segment covering 100–121 (QRTRTNARTRRGSRKTVAGRKK) has biased composition (basic residues).

Belongs to the universal ribosomal protein uS13 family. In terms of assembly, part of the 30S ribosomal subunit. Forms a loose heterodimer with protein S19. Forms two bridges to the 50S subunit in the 70S ribosome.

Located at the top of the head of the 30S subunit, it contacts several helices of the 16S rRNA. In the 70S ribosome it contacts the 23S rRNA (bridge B1a) and protein L5 of the 50S subunit (bridge B1b), connecting the 2 subunits; these bridges are implicated in subunit movement. Contacts the tRNAs in the A and P-sites. The chain is Small ribosomal subunit protein uS13 from Prochlorococcus marinus (strain MIT 9211).